The chain runs to 97 residues: Small ribosomal subunit protein bS6 (97 aa).

Belongs to the bacterial ribosomal protein bS6 family.

Binds together with bS18 to 16S ribosomal RNA. The polypeptide is Small ribosomal subunit protein bS6 (Listeria innocua serovar 6a (strain ATCC BAA-680 / CLIP 11262)).